A 428-amino-acid polypeptide reads, in one-letter code: Dihydroorotase (428 aa).

The Zn(2+) site is built by H61 and H63. Residues 63 to 65 and N95 each bind substrate; that span reads HLR. The Zn(2+) site is built by D153, H180, and H233. Position 279 (N279) interacts with substrate. Residue D306 coordinates Zn(2+). Residue D306 is part of the active site. Residues H310 and 324-325 contribute to the substrate site; that span reads FG.

It belongs to the metallo-dependent hydrolases superfamily. DHOase family. Class I DHOase subfamily. The cofactor is Zn(2+).

It carries out the reaction (S)-dihydroorotate + H2O = N-carbamoyl-L-aspartate + H(+). It functions in the pathway pyrimidine metabolism; UMP biosynthesis via de novo pathway; (S)-dihydroorotate from bicarbonate: step 3/3. Its function is as follows. Catalyzes the reversible cyclization of carbamoyl aspartate to dihydroorotate. The protein is Dihydroorotase of Geobacillus kaustophilus (strain HTA426).